Here is a 935-residue protein sequence, read N- to C-terminus: C-1-tetrahydrofolate synthase, cytoplasmic (935 aa).

Methionine 1 carries the post-translational modification N-acetylmethionine. The interval 2–291 (APAGILNGKL…MLMQSTVESA (290 aa)) is methylenetetrahydrofolate dehydrogenase and methenyltetrahydrofolate cyclohydrolase (D/C) domain. Substrate contacts are provided by residues 52-56 (YINVK) and 99-101 (VQL). Lysine 56 is an active-site residue. NADP(+) contacts are provided by residues 172-174 (GRS) and serine 197. 272–276 (PGGVG) provides a ligand contact to substrate. The formyltetrahydrofolate synthetase domain stretch occupies residues 310-935 (LNLKTPVPSD…PETEQVNGLF (626 aa)). The residue at position 318 (serine 318) is a Phosphoserine. 380-387 (TPLGEGKS) provides a ligand contact to ATP. 2 positions are modified to phosphoserine: serine 413 and serine 490.

The protein in the N-terminal section; belongs to the tetrahydrofolate dehydrogenase/cyclohydrolase family. In the C-terminal section; belongs to the formate--tetrahydrofolate ligase family. As to quaternary structure, homodimer.

The protein resides in the cytoplasm. It catalyses the reaction (6R)-5,10-methylene-5,6,7,8-tetrahydrofolate + NADP(+) = (6R)-5,10-methenyltetrahydrofolate + NADPH. The enzyme catalyses (6R)-5,10-methenyltetrahydrofolate + H2O = (6R)-10-formyltetrahydrofolate + H(+). The catalysed reaction is (6S)-5,6,7,8-tetrahydrofolate + formate + ATP = (6R)-10-formyltetrahydrofolate + ADP + phosphate. It participates in one-carbon metabolism; tetrahydrofolate interconversion. Its function is as follows. Trifunctional enzyme that catalyzes the interconversion of three forms of one-carbon-substituted tetrahydrofolate: (6R)-5,10-methylene-5,6,7,8-tetrahydrofolate, 5,10-methenyltetrahydrofolate and (6S)-10-formyltetrahydrofolate. These derivatives of tetrahydrofolate are differentially required in nucleotide and amino acid biosynthesis, (6S)-10-formyltetrahydrofolate being required for purine biosynthesis while (6R)-5,10-methylene-5,6,7,8-tetrahydrofolate is used for serine and methionine biosynthesis for instance. The polypeptide is C-1-tetrahydrofolate synthase, cytoplasmic (Mthfd1) (Mus musculus (Mouse)).